Here is a 460-residue protein sequence, read N- to C-terminus: Cysteine--tRNA ligase (460 aa).

Position 28 (C28) interacts with Zn(2+). The 'HIGH' region signature appears at 30–40 (MTVYDYCHLGH). 3 residues coordinate Zn(2+): C209, H234, and E238. The 'KMSKS' region motif lies at 266–270 (KMSKS). K269 lines the ATP pocket.

Belongs to the class-I aminoacyl-tRNA synthetase family. As to quaternary structure, monomer. Zn(2+) is required as a cofactor.

The protein localises to the cytoplasm. The catalysed reaction is tRNA(Cys) + L-cysteine + ATP = L-cysteinyl-tRNA(Cys) + AMP + diphosphate. The polypeptide is Cysteine--tRNA ligase (Pseudomonas paraeruginosa (strain DSM 24068 / PA7) (Pseudomonas aeruginosa (strain PA7))).